We begin with the raw amino-acid sequence, 150 residues long: Viral late gene transcription factor 2 (150 aa).

The protein belongs to the orthopoxvirus VLTF-2/OPG126 family. Interacts with itself. Interacts with the late transcription factors VLTF-1/OPG093.

Its function is as follows. Acts with RNA polymerase to initiate transcription from late gene promoters. This chain is Viral late gene transcription factor 2 (OPG126), found in Vaccinia virus (strain Copenhagen) (VACV).